We begin with the raw amino-acid sequence, 355 residues long: Fructose-1,6-bisphosphatase class 1 (355 aa).

Positions 94, 116, 118, and 119 each coordinate Mg(2+). Substrate contacts are provided by residues 119 to 122 (DGSS), asparagine 211, and 263 to 265 (YLY). Residue glutamate 283 participates in Mg(2+) binding.

This sequence belongs to the FBPase class 1 family. In terms of assembly, homotetramer. Mg(2+) serves as cofactor.

The protein localises to the cytoplasm. The enzyme catalyses beta-D-fructose 1,6-bisphosphate + H2O = beta-D-fructose 6-phosphate + phosphate. The protein operates within carbohydrate biosynthesis; Calvin cycle. The polypeptide is Fructose-1,6-bisphosphatase class 1 (Rhodospirillum rubrum (strain ATCC 11170 / ATH 1.1.1 / DSM 467 / LMG 4362 / NCIMB 8255 / S1)).